A 445-amino-acid chain; its full sequence is Argininosuccinate synthase (445 aa).

ATP is bound by residues 18–26 (AFSGGLDTS) and alanine 44. Tyrosine 100 is an L-citrulline binding site. Glycine 130 and threonine 132 together coordinate ATP. Residues threonine 132, asparagine 136, and aspartate 137 each coordinate L-aspartate. Asparagine 136 contacts L-citrulline. Aspartate 137 provides a ligand contact to ATP. Arginine 140 and serine 193 together coordinate L-citrulline. An ATP-binding site is contributed by aspartate 195. L-citrulline contacts are provided by threonine 202, glutamate 204, and glutamate 281.

The protein belongs to the argininosuccinate synthase family. Type 2 subfamily. As to quaternary structure, homotetramer.

Its subcellular location is the cytoplasm. The catalysed reaction is L-citrulline + L-aspartate + ATP = 2-(N(omega)-L-arginino)succinate + AMP + diphosphate + H(+). Its pathway is amino-acid biosynthesis; L-arginine biosynthesis; L-arginine from L-ornithine and carbamoyl phosphate: step 2/3. This Pasteurella multocida (strain Pm70) protein is Argininosuccinate synthase (argG).